Reading from the N-terminus, the 197-residue chain is Inosine triphosphate pyrophosphatase (197 aa).

10-15 (TGNANK) lines the ITP pocket. Glutamate 45 provides a ligand contact to Mg(2+). Residues lysine 58, 76–77 (DT), lysine 93, 151–154 (FGWD), lysine 175, and 180–181 (HR) each bind ITP.

Belongs to the HAM1 NTPase family. Homodimer. Requires Mg(2+) as cofactor. The cofactor is Mn(2+).

The protein localises to the cytoplasm. The protein resides in the nucleus. It carries out the reaction ITP + H2O = IMP + diphosphate + H(+). The enzyme catalyses dITP + H2O = dIMP + diphosphate + H(+). The catalysed reaction is XTP + H2O = XMP + diphosphate + H(+). It catalyses the reaction N(6)-hydroxy-dATP + H2O = N(6)-hydroxy-dAMP + diphosphate + H(+). Functionally, pyrophosphatase that hydrolyzes the non-canonical purine nucleotides inosine triphosphate (ITP), deoxyinosine triphosphate (dITP) as well as 2'-deoxy-N-6-hydroxylaminopurine triphosphate (dHAPTP) and 5-bromodeoxyuridine 5'-triphosphate (BrdUTP) to their respective monophosphate derivatives. Xanthosine 5'-triphosphate (XTP) is also a potential substrate. The enzyme does not distinguish between the deoxy- and ribose forms. Probably excludes non-canonical purines from RNA and DNA precursor pools, thus preventing their incorporation into RNA and DNA and avoiding chromosomal lesions. The protein is Inosine triphosphate pyrophosphatase of Saccharomyces cerevisiae (strain ATCC 204508 / S288c) (Baker's yeast).